Reading from the N-terminus, the 213-residue chain is Motile sperm domain-containing protein 1 (213 aa).

Positions 16-143 (PVFVFPTELI…KEHLTESLFF (128 aa)) constitute an MSP domain. The next 2 helical transmembrane spans lie at 159–179 (SLLTVFLAVVCITALMLPTLG) and 191–211 (LSVNQKLVAAYILGLITMAIF). Residues 205-208 (LITM) carry the Nuclear export signal motif.

Its subcellular location is the endoplasmic reticulum membrane. The protein localises to the golgi apparatus membrane. Its function is as follows. Plays a role in differentiation and/or proliferation of mesenchymal stem cells. Proposed to be involved in epithelial-to-mesenchymal transition (EMT). However, another study suggests that it is not required for EMT or stem cell self-renewal and acts during later stages of differentiation. The polypeptide is Motile sperm domain-containing protein 1 (MOSPD1) (Bos taurus (Bovine)).